We begin with the raw amino-acid sequence, 404 residues long: Ethanolamine-phosphate cytidylyltransferase (404 aa).

Positions tyrosine 173–glycine 201 are disordered. The segment covering threonine 189–glycine 201 has biased composition (polar residues). Residues alanine 239–phenylalanine 240, histidine 247–phenylalanine 250, lysine 277, histidine 325–threonine 328, and serine 354–leucine 358 contribute to the CTP site. Serine 356 is subject to Phosphoserine. Phosphothreonine occurs at positions 359 and 360.

It belongs to the cytidylyltransferase family.

The enzyme catalyses phosphoethanolamine + CTP + H(+) = CDP-ethanolamine + diphosphate. Its pathway is phospholipid metabolism; phosphatidylethanolamine biosynthesis; phosphatidylethanolamine from ethanolamine: step 2/3. Functionally, ethanolamine-phosphate cytidylyltransferase that catalyzes the second step in the synthesis of phosphatidylethanolamine (PE) from ethanolamine via the CDP-ethanolamine pathway. Phosphatidylethanolamine is a dominant inner-leaflet phospholipid in cell membranes, where it plays a role in membrane function by structurally stabilizing membrane-anchored proteins, and participates in important cellular processes such as cell division, cell fusion, blood coagulation, and apoptosis. The sequence is that of Ethanolamine-phosphate cytidylyltransferase (Pcyt2) from Mus musculus (Mouse).